Consider the following 574-residue polypeptide: Acetolactate synthase large subunit (574 aa).

Residue Glu-51 participates in thiamine diphosphate binding. Residues Arg-153, 261–282 (HGTY…IGVR), and 304–323 (DIDP…IVGN) each bind FAD. Positions 397 to 477 (QHQMFAALYY…ILILNLNNKS (81 aa)) are thiamine pyrophosphate binding. 2 residues coordinate Mg(2+): Asp-448 and Asn-475.

Belongs to the TPP enzyme family. As to quaternary structure, dimer of large and small chains. Mg(2+) is required as a cofactor. It depends on thiamine diphosphate as a cofactor.

It carries out the reaction 2 pyruvate + H(+) = (2S)-2-acetolactate + CO2. It functions in the pathway amino-acid biosynthesis; L-isoleucine biosynthesis; L-isoleucine from 2-oxobutanoate: step 1/4. It participates in amino-acid biosynthesis; L-valine biosynthesis; L-valine from pyruvate: step 1/4. This Buchnera aphidicola subsp. Schlechtendalia chinensis protein is Acetolactate synthase large subunit (ilvI).